An 87-amino-acid chain; its full sequence is Signal recognition particle 19 kDa protein (87 aa).

Belongs to the SRP19 family. In terms of assembly, part of the signal recognition particle protein translocation system, which is composed of SRP and FtsY. Archaeal SRP consists of a 7S RNA molecule of 300 nucleotides and two protein subunits: SRP54 and SRP19.

It localises to the cytoplasm. Functionally, involved in targeting and insertion of nascent membrane proteins into the cytoplasmic membrane. Binds directly to 7S RNA and mediates binding of the 54 kDa subunit of the SRP. The chain is Signal recognition particle 19 kDa protein from Methanocaldococcus jannaschii (strain ATCC 43067 / DSM 2661 / JAL-1 / JCM 10045 / NBRC 100440) (Methanococcus jannaschii).